The chain runs to 383 residues: Cyclin-D4-2 (383 aa).

Residues 51 to 62 (AAGGGGGSGGGG) are compositionally biased toward gly residues. Disordered regions lie at residues 51–70 (AAGGGGGSGGGGVEEEEDMF), 313–335 (QPKPASTRRGSASASSSSVPESP), and 354–383 (ATIASHGGGRRKSCFDSSPVTSKKRRKLSR). The span at 323–335 (SASASSSSVPESP) shows a compositional bias: low complexity.

It belongs to the cyclin family. Cyclin D subfamily.

The sequence is that of Cyclin-D4-2 (CYCD4-2) from Oryza sativa subsp. japonica (Rice).